The primary structure comprises 361 residues: Cdc42 effector protein 1 (361 aa).

A disordered region spans residues 1–29 (MPGPQGAGGAPAMNLGKLSPVGWVSSSQG). Ser-19 and Ser-27 each carry phosphoserine. Phosphothreonine is present on Thr-34. The CRIB domain maps to 38 to 52 (ISPPLGDFRHTMHVG). Ser-39 carries the phosphoserine modification. An Omega-N-methylarginine modification is found at Arg-53. 11 positions are modified to phosphoserine: Ser-65, Ser-73, Ser-77, Ser-101, Ser-113, Ser-121, Ser-139, Ser-180, Ser-190, Ser-192, and Ser-195. The segment at 161–186 (CTISRLPRPEKPRDRDRDSSFPAEPE) is disordered. Residues 167 to 186 (PRPEKPRDRDRDSSFPAEPE) show a composition bias toward basic and acidic residues. Disordered regions lie at residues 218–300 (EGSA…SRHH) and 320–361 (SWGS…EVKV). Repeat copies occupy residues 220-226 (SAAETPA), 229-235 (PAASPPA), 236-242 (SVANPPA), and 243-249 (PASSPSL). A 4 X 7 AA tandem repeats of [PT]-[AT]-A-[ENT]-[PT]-[PTS]-[AG] region spans residues 220–249 (SAAETPAPAPAASPPASVANPPAPASSPSL). Residues Ser-270, Ser-320, and Ser-323 each carry the phosphoserine modification. Over residues 332–347 (QAGSRTPVPSTVQANT) the composition is skewed to polar residues. Acidic residues predominate over residues 351–361 (ADAEEDDEVKV).

Belongs to the BORG/CEP family. Interacts with RHOQ and CDC42, in a GTP-dependent manner.

The protein resides in the endomembrane system. It localises to the cytoplasm. Its subcellular location is the cytoskeleton. In terms of biological role, probably involved in the organization of the actin cytoskeleton. Induced membrane extensions in fibroblasts. The chain is Cdc42 effector protein 1 from Bos taurus (Bovine).